We begin with the raw amino-acid sequence, 850 residues long: Pre-mRNA-splicing factor SYF1 (850 aa).

HAT repeat units lie at residues 25 to 57 (IQPSIDDLPYEEDVSKNPYSVNCWLRYLEFKQG), 58 to 90 (SPQKQRNYIYERAIRELPRSYKIWHQYLLERTL), 100 to 132 (NSFEAVNTLFERSLVFLDKMPRIWIEYCEFLMI), 134 to 168 (EKITLTRKTFDRALIALPVTQHYRIWNEYTKFILK), 171 to 203 (IPSLTCIRVYKRYLKIQPEKVEEYIEYLIKIKE), 281 to 316 (AQFEKARDIFEEALTSVGTARDFSFIWESYTQFEDS), 477 to 509 (KKQNTIIEENEPVQKRLFKSIKIWTFYVDLEES), 511 to 543 (GTFHNTKSIYEKMIQLKVVTPQIILNFAKYLEE), 545 to 579 (KYFEDMFKAYEHGVQLFLFPHVQDIWITYLTKFIQ), 584 to 618 (MKLERTRDLFEQVLSKVPPKESIIFYLMYANFEEQ), and 692 to 726 (GEIDRARSIYIHGSQFSDPRTSMFYWNTWSDFEKL). The span at 761 to 771 (NNKDDKDDKNQ) shows a compositional bias: basic and acidic residues. Positions 761–837 (NNKDDKDDKN…EEEEEEEDQL (77 aa)) are disordered. The segment covering 772 to 792 (QQKQQQQQQEKQQQQQQQQQQ) has biased composition (low complexity). Residues 793–812 (ASTLTKSKPVTVSLPETIQY) are compositionally biased toward polar residues. Acidic residues predominate over residues 818-836 (NDDEINLDDDEEEEEEEDQ).

It belongs to the crooked-neck family. As to quaternary structure, identified in the spliceosome C complex.

The protein localises to the nucleus. Functionally, involved in pre-mRNA splicing as component of the spliceosome. Involved in transcription-coupled repair (TCR), transcription and pre-mRNA splicing. The chain is Pre-mRNA-splicing factor SYF1 (xab2) from Dictyostelium discoideum (Social amoeba).